Reading from the N-terminus, the 398-residue chain is MSQENWIDLEKKYHLQIYGRLPVVLVEGKGMEVYDIDGKKYLDFLAGIGVNNVGHCHPKVVEAIKKQAETLIHTSNIYYTIPQIKLAKKLVELSGLDRAFFCNSGAEANEGAIKFARKYVSKVLGREGGEIISMYNAFHGRTLTTLAATPKPKYQDGFYPLPPGFKYVPFNDIEALKEAITDKTAAIMIEPVQGEGGIHVADKDYLKAVRDLCDDKNIVLIFDEVQCGMGRTGRMFAFEHYGVEPDILTLAKALGGGVPIGAVVLKEEIAKALSYGDHGTTFGGNPLACSAALASVEVIEELIKDDKVIEKGKYFIRKLENLIEKYNFIKEVRGLGLMIGAELEFNGADIVKKMLEKGFLINCTSDTVLRFLPPLIVEKEHIDALINALDEVFTEIKK.

Pyridoxal 5'-phosphate-binding positions include 105 to 106 (GA) and F138. Residue R141 coordinates N(2)-acetyl-L-ornithine. 223 to 226 (DEVQ) is a binding site for pyridoxal 5'-phosphate. An N6-(pyridoxal phosphate)lysine modification is found at K252. Position 280 (T280) interacts with N(2)-acetyl-L-ornithine. Pyridoxal 5'-phosphate is bound at residue T281.

The protein belongs to the class-III pyridoxal-phosphate-dependent aminotransferase family. ArgD subfamily. As to quaternary structure, homodimer. It depends on pyridoxal 5'-phosphate as a cofactor.

The protein localises to the cytoplasm. It carries out the reaction N(2)-acetyl-L-ornithine + 2-oxoglutarate = N-acetyl-L-glutamate 5-semialdehyde + L-glutamate. It participates in amino-acid biosynthesis; L-arginine biosynthesis; N(2)-acetyl-L-ornithine from L-glutamate: step 4/4. The chain is Acetylornithine aminotransferase from Methanocaldococcus jannaschii (strain ATCC 43067 / DSM 2661 / JAL-1 / JCM 10045 / NBRC 100440) (Methanococcus jannaschii).